Consider the following 207-residue polypeptide: MSRYRGPRLRIIRRLRNLPGLTNKLVESKKNQASGSDQSNQKKVSQYCIRLEAKQRLRFNYGLTERQLLNYVRIARCAKGSTGQILLQLLEMRLDNILFRLGVVPTIPSARQLINHRHILVNNRIVDIPSFHCKPKDIITIGAPKTYQSIITKRIEAFAKDQIPDHLTLSLSEPKKPKGFVNYLINRESIGLKINELLVVEYYSRKA.

The S4 RNA-binding domain maps to 92 to 156 (MRLDNILFRL…YQSIITKRIE (65 aa)).

This sequence belongs to the universal ribosomal protein uS4 family. As to quaternary structure, part of the 30S ribosomal subunit. Contacts protein S5. The interaction surface between S4 and S5 is involved in control of translational fidelity.

The protein resides in the plastid. It is found in the chloroplast. One of the primary rRNA binding proteins, it binds directly to 16S rRNA where it nucleates assembly of the body of the 30S subunit. In terms of biological role, with S5 and S12 plays an important role in translational accuracy. The polypeptide is Small ribosomal subunit protein uS4c (rps4) (Equisetum sylvaticum (Wood horsetail)).